We begin with the raw amino-acid sequence, 359 residues long: 3-dehydroquinate synthase (359 aa).

NAD(+)-binding positions include Asp70–Lys75, Gly105–Asp109, Thr129–Thr130, Lys142, Lys151, and Phe169–Thr172. Zn(2+) is bound by residues Glu184, His247, and His264.

This sequence belongs to the sugar phosphate cyclases superfamily. Dehydroquinate synthase family. Co(2+) serves as cofactor. Requires Zn(2+) as cofactor. NAD(+) is required as a cofactor.

Its subcellular location is the cytoplasm. It carries out the reaction 7-phospho-2-dehydro-3-deoxy-D-arabino-heptonate = 3-dehydroquinate + phosphate. It functions in the pathway metabolic intermediate biosynthesis; chorismate biosynthesis; chorismate from D-erythrose 4-phosphate and phosphoenolpyruvate: step 2/7. Functionally, catalyzes the conversion of 3-deoxy-D-arabino-heptulosonate 7-phosphate (DAHP) to dehydroquinate (DHQ). The polypeptide is 3-dehydroquinate synthase (Francisella tularensis subsp. tularensis (strain FSC 198)).